A 418-amino-acid chain; its full sequence is NADH-quinone oxidoreductase subunit D (418 aa).

Belongs to the complex I 49 kDa subunit family. As to quaternary structure, NDH-1 is composed of 14 different subunits. Subunits NuoB, C, D, E, F, and G constitute the peripheral sector of the complex.

The protein localises to the cell inner membrane. The catalysed reaction is a quinone + NADH + 5 H(+)(in) = a quinol + NAD(+) + 4 H(+)(out). In terms of biological role, NDH-1 shuttles electrons from NADH, via FMN and iron-sulfur (Fe-S) centers, to quinones in the respiratory chain. The immediate electron acceptor for the enzyme in this species is believed to be ubiquinone. Couples the redox reaction to proton translocation (for every two electrons transferred, four hydrogen ions are translocated across the cytoplasmic membrane), and thus conserves the redox energy in a proton gradient. This is NADH-quinone oxidoreductase subunit D from Neisseria meningitidis serogroup C / serotype 2a (strain ATCC 700532 / DSM 15464 / FAM18).